The following is a 326-amino-acid chain: D-amino-acid oxidase (326 aa).

The FAD site is built by Gly-18, Val-19, Thr-46, Thr-47, Ser-48, Ala-52, Ala-53, Val-162, and Ser-179. Tyr-222 and Arg-277 together coordinate D-proline. Tyr-222 and Arg-277 together coordinate D-serine. Residues Arg-277, Gly-303, Gly-304, Gly-306, and Thr-308 each contribute to the FAD site. Gly-304 is a D-proline binding site. Residue Gly-304 participates in D-serine binding.

It belongs to the DAMOX/DASOX family. As to quaternary structure, monomer. Requires FAD as cofactor.

It localises to the cytoplasm. It is found in the secreted. The protein resides in the cell wall. The catalysed reaction is a D-alpha-amino acid + O2 + H2O = a 2-oxocarboxylate + H2O2 + NH4(+). It carries out the reaction D-valine + O2 + H2O = 3-methyl-2-oxobutanoate + H2O2 + NH4(+). The enzyme catalyses D-leucine + O2 + H2O = 4-methyl-2-oxopentanoate + H2O2 + NH4(+). It catalyses the reaction D-isoleucine + O2 + H2O = (R)-3-methyl-2-oxopentanoate + H2O2 + NH4(+). The catalysed reaction is D-tyrosine + O2 + H2O = 3-(4-hydroxyphenyl)pyruvate + H2O2 + NH4(+). It carries out the reaction D-threonine + O2 + H2O = (S)-3-hydroxy-2-oxobutanoate + H2O2 + NH4(+). Inhibited by benzoate and phenylmethylsulfonyl fluoride (PMSF). Weakly inhibited by anthranilate, crotonate, and the amino acid-modifying agents dithionitrobenzoic acid and diethyl pyrocarbonate. Not inhibited by malonate, meso-tartrate, D-malate, or the amino acid-modifying agents iodoacetic acid or butane-2,3-dione. Catalyzes the oxidative deamination of D-amino acids with broad substrate specificity. This Rubrobacter xylanophilus (strain DSM 9941 / JCM 11954 / NBRC 16129 / PRD-1) protein is D-amino-acid oxidase.